The sequence spans 509 residues: Sperm-associated antigen 6 (509 aa).

8 ARM repeats span residues 31–70 (PQNI…RLAN), 73–112 (DDLA…AVGK), 115–154 (PQLA…YIAR), 157–196 (AELS…DIAK), 199–238 (PELA…QVSK), 241–280 (VDLA…EIAK), 325–365 (ENLA…QIGR), and 368–409 (PEHA…NILQ).

Interacts with SPAG16 and SPAG17. In terms of tissue distribution, highly expressed in testis.

It is found in the cytoplasm. The protein resides in the cytoskeleton. The protein localises to the cell projection. Its subcellular location is the cilium. It localises to the flagellum. It is found in the cilium axoneme. Important for structural integrity of the central apparatus in the sperm tail and for flagellar motility. This is Sperm-associated antigen 6 (SPAG6) from Homo sapiens (Human).